Here is a 319-residue protein sequence, read N- to C-terminus: tRNA uridine(34) hydroxylase (319 aa).

The region spanning 127–221 (KQEDTVIIDA…YGKDPEVQGE (95 aa)) is the Rhodanese domain. Residue C181 is the Cysteine persulfide intermediate of the active site.

It belongs to the TrhO family.

The catalysed reaction is uridine(34) in tRNA + AH2 + O2 = 5-hydroxyuridine(34) in tRNA + A + H2O. Catalyzes oxygen-dependent 5-hydroxyuridine (ho5U) modification at position 34 in tRNAs. This Bacillus cereus (strain Q1) protein is tRNA uridine(34) hydroxylase.